The following is a 491-amino-acid chain: Katanin p60 ATPase-containing subunit A1 (491 aa).

An interaction with KATNB1 region spans residues methionine 1–tyrosine 29. An interaction with dynein and NDEL1 region spans residues methionine 1 to serine 75. The interaction with microtubules; sufficient for microtubule severing activity stretch occupies residues methionine 1–threonine 185. A Phosphoserine; by DYRK2 modification is found at serine 42. The tract at residues proline 101–phenylalanine 182 is disordered. The segment covering histidine 145–lysine 169 has biased composition (basic and acidic residues). Residue glycine 249 to threonine 256 coordinates ATP.

Belongs to the AAA ATPase family. Katanin p60 subunit A1 subfamily. Can homooligomerize into hexameric rings, which may be promoted by interaction with microtubules. Interacts with KATNB1, which may serve as a targeting subunit. Interacts with ASPM; the katanin complex formation KATNA1:KATNB1 is required for the association of ASPM. Interacts with dynein and NDEL1. Associates with the E3 ligase complex containing DYRK2, EDD/UBR5, DDB1 and DCAF1 proteins (EDVP complex). Interacts with KLHL42 (via the kelch domains). Interacts with CUL3; the interaction is enhanced by KLHL42. Interacts with KATNB1 and KATNBL1. Interacts with CAMSAP2 and CAMSAP3; leading to regulate the length of CAMSAP-decorated microtubule stretches. Phosphorylation by DYRK2 triggers ubiquitination and subsequent degradation. In terms of processing, ubiquitinated by the BCR(KLHL42) E3 ubiquitin ligase complex, leading to its proteasomal degradation. Ubiquitinated by the EDVP E3 ligase complex and subsequently targeted for proteasomal degradation.

The protein resides in the cytoplasm. It localises to the midbody. It is found in the cytoskeleton. The protein localises to the microtubule organizing center. Its subcellular location is the centrosome. The protein resides in the spindle pole. It localises to the spindle. The enzyme catalyses n ATP + n H2O + a microtubule = n ADP + n phosphate + (n+1) alpha/beta tubulin heterodimers.. ATPase activity is stimulated by microtubules, which promote homooligomerization. ATP-dependent microtubule severing is stimulated by interaction with KATNB1. Its function is as follows. Catalytic subunit of a complex which severs microtubules in an ATP-dependent manner. Microtubule severing may promote rapid reorganization of cellular microtubule arrays and the release of microtubules from the centrosome following nucleation. Microtubule release from the mitotic spindle poles may allow depolymerization of the microtubule end proximal to the spindle pole, leading to poleward microtubule flux and poleward motion of chromosome. The function in regulating microtubule dynamics at spindle poles seems to depend on the association of the katanin KATNA1:KATNB1 complex with ASPM which recruits it to microtubules. Reversely KATNA1:KATNB1 can enhance ASPM blocking activity on microtubule minus-end growth. Microtubule release within the cell body of neurons may be required for their transport into neuronal processes by microtubule-dependent motor proteins. This transport is required for axonal growth. The polypeptide is Katanin p60 ATPase-containing subunit A1 (Katna1) (Mus musculus (Mouse)).